The sequence spans 419 residues: L-rhamnose isomerase (419 aa).

H262, D294, and D296 together coordinate Mn(2+).

This sequence belongs to the rhamnose isomerase family. In terms of assembly, homotetramer. Mn(2+) serves as cofactor.

The protein resides in the cytoplasm. The enzyme catalyses L-rhamnopyranose = L-rhamnulose. It participates in carbohydrate degradation; L-rhamnose degradation; glycerone phosphate from L-rhamnose: step 1/3. In terms of biological role, catalyzes the interconversion of L-rhamnose and L-rhamnulose. The polypeptide is L-rhamnose isomerase (Salmonella gallinarum (strain 287/91 / NCTC 13346)).